A 329-amino-acid chain; its full sequence is Apolipoprotein E (329 aa).

The N-terminal stretch at 1–18 (MKVLWAALVVALLAGCWA) is a signal peptide. Repeat copies occupy residues 92–113 (TLMEETMKEIKAYRAELEEQLG), 114–135 (PMASETQARVAKELQAAQARLR), 136–157 (SDMEDVRTRLSQYRGEVQAMLG), 158–179 (QSTEELRARFASHMRKLRKRVL), 180–201 (RDAEDLQKRLAVYRAGVREGAE), 202–223 (RSVSTIRERLWPLLEQARTRHA), 224–245 (KVDALATQPLRERVNALGQQLR), and 246–267 (GRLEEVGSRARSHLDEVREQME). Residues 92–267 (TLMEETMKEI…HLDEVREQME (176 aa)) are 8 X 22 AA approximate tandem repeats. At Met-155 the chain carries Methionine sulfoxide. Ser-159 carries the post-translational modification Phosphoserine. The tract at residues 170–180 (HMRKLRKRVLR) is LDL and other lipoprotein receptors binding. 174 to 177 (LRKR) is a binding site for heparin. Positions 222–302 (HAKVDALATQ…GWFEPLVEDM (81 aa)) are lipid-binding and lipoprotein association. Residue 241–248 (GQQLRGRL) participates in heparin binding. Residues 278–329 (NQMRQQAEAFQARLKGWFEPLVEDMQRQWAVLVEKVQAAVGTSPTTPPVETK) form a homooligomerization region. A specificity for association with VLDL region spans residues 290 to 302 (RLKGWFEPLVEDM).

It belongs to the apolipoprotein A1/A4/E family. As to quaternary structure, homotetramer. May interact with ABCA1; functionally associated with ABCA1 in the biogenesis of HDLs. May interact with APP/A4 amyloid-beta peptide; the interaction is extremely stable in vitro but its physiological significance is unclear. May interact with MAPT. May interact with MAP2. In the cerebrospinal fluid, interacts with secreted SORL1. Interacts with PMEL; this allows the loading of PMEL luminal fragment on ILVs to induce fibril nucleation. APOE exists as multiple glycosylated and sialylated glycoforms within cells and in plasma. The extent of glycosylation and sialylation are tissue and context specific. In terms of processing, glycated in plasma VLDL. Post-translationally, phosphorylated by FAM20C in the extracellular medium.

Its subcellular location is the secreted. The protein resides in the extracellular space. The protein localises to the extracellular matrix. It is found in the extracellular vesicle. It localises to the endosome. Its subcellular location is the multivesicular body. Its function is as follows. APOE is an apolipoprotein, a protein associating with lipid particles, that mainly functions in lipoprotein-mediated lipid transport between organs via the plasma and interstitial fluids. APOE is a core component of plasma lipoproteins and is involved in their production, conversion and clearance. Apolipoproteins are amphipathic molecules that interact both with lipids of the lipoprotein particle core and the aqueous environment of the plasma. As such, APOE associates with chylomicrons, chylomicron remnants, very low density lipoproteins (VLDL) and intermediate density lipoproteins (IDL) but shows a preferential binding to high-density lipoproteins (HDL). It also binds a wide range of cellular receptors including the LDL receptor/LDLR, the LDL receptor-related proteins LRP1, LRP2 and LRP8 and the very low-density lipoprotein receptor/VLDLR that mediate the cellular uptake of the APOE-containing lipoprotein particles. Finally, APOE also has a heparin-binding activity and binds heparan-sulfate proteoglycans on the surface of cells, a property that supports the capture and the receptor-mediated uptake of APOE-containing lipoproteins by cells. A main function of APOE is to mediate lipoprotein clearance through the uptake of chylomicrons, VLDLs, and HDLs by hepatocytes. APOE is also involved in the biosynthesis by the liver of VLDLs as well as their uptake by peripheral tissues ensuring the delivery of triglycerides and energy storage in muscle, heart and adipose tissues. By participating in the lipoprotein-mediated distribution of lipids among tissues, APOE plays a critical role in plasma and tissues lipid homeostasis. APOE is also involved in two steps of reverse cholesterol transport, the HDLs-mediated transport of cholesterol from peripheral tissues to the liver, and thereby plays an important role in cholesterol homeostasis. First, it is functionally associated with ABCA1 in the biogenesis of HDLs in tissues. Second, it is enriched in circulating HDLs and mediates their uptake by hepatocytes. APOE also plays an important role in lipid transport in the central nervous system, regulating neuron survival and sprouting. This is Apolipoprotein E (APOE) from Eumetopias jubatus (Steller sea lion).